The chain runs to 349 residues: Interferon regulatory factor 2 (349 aa).

The IRF tryptophan pentad repeat DNA-binding region spans 5-113 (RMRMRPWLEE…NAFRVYRMLP (109 aa)). N6-acetyllysine occurs at positions 75 and 78. A Glycyl lysine isopeptide (Lys-Gly) (interchain with G-Cter in SUMO); alternate cross-link involves residue Lys-137. Lys-137 participates in a covalent cross-link: Glycyl lysine isopeptide (Lys-Gly) (interchain with G-Cter in SUMO2); alternate. Lys-166 participates in a covalent cross-link: Glycyl lysine isopeptide (Lys-Gly) (interchain with G-Cter in SUMO). Ser-225 is subject to Phosphoserine. The segment covering 230-239 (YAESETTDSV) has biased composition (polar residues). Residues 230-253 (YAESETTDSVASDEENAEGRPHWR) are disordered. A Glycyl lysine isopeptide (Lys-Gly) (interchain with G-Cter in SUMO2) cross-link involves residue Lys-260. A Glycyl lysine isopeptide (Lys-Gly) (interchain with G-Cter in SUMO) cross-link involves residue Lys-293. The disordered stretch occupies residues 303-349 (SSWPPFTDLPLPAPVTPTPSSSRPDRETRASVIKKTSDITQARVKSC).

The protein belongs to the IRF family. Interacts with BRD7, IRF2BP1 and IRF2BP2. Interacts with CREBBP in growing cells; the interaction acetylates IRF2 and regulates IRF2-dependent H4 promoter activity. Acetylated by CBP/ p300 during cell-growth. Acetylation on Lys-75 is required for stimulation of H4 promoter activity. Post-translationally, the major sites of sumoylation are Lys-137 and Lys-293. Sumoylation with SUMO1 increases its transcriptional repressor activity on IRF1 and diminishes its ability to activate ISRE and H4 promoter.

The protein resides in the nucleus. Functionally, specifically binds to the upstream regulatory region of type I IFN and IFN-inducible MHC class I genes (the interferon consensus sequence (ICS)) and represses those genes. Also acts as an activator for several genes including H4 and IL7. Constitutively binds to the ISRE promoter to activate IL7. Involved in cell cycle regulation through binding the site II (HiNF-M) promoter region of H4 and activating transcription during cell growth. Antagonizes IRF1 transcriptional activation. The protein is Interferon regulatory factor 2 (Irf2) of Mus musculus (Mouse).